Consider the following 128-residue polypeptide: 3-aminoacrylate deaminase RutC (128 aa).

The protein belongs to the RutC family.

The catalysed reaction is (Z)-3-aminoacrylate + H2O + H(+) = 3-oxopropanoate + NH4(+). Functionally, involved in pyrimidine catabolism. Catalyzes the deamination of 3-aminoacrylate to malonic semialdehyde, a reaction that can also occur spontaneously. RutC may facilitate the reaction and modulate the metabolic fitness, rather than catalyzing essential functions. In Enterobacter cloacae subsp. cloacae (strain ATCC 13047 / DSM 30054 / NBRC 13535 / NCTC 10005 / WDCM 00083 / NCDC 279-56), this protein is 3-aminoacrylate deaminase RutC.